The following is a 517-amino-acid chain: GMP synthase [glutamine-hydrolyzing] (517 aa).

In terms of domain architecture, Glutamine amidotransferase type-1 spans 9–199; it reads RILILDFGSQ…VLGVCGCERL (191 aa). The active-site Nucleophile is Cys86. Residues His173 and Glu175 contribute to the active site. The GMPS ATP-PPase domain occupies 200–392; that stretch reads WTSESIIEDA…LGLPYEMLYR (193 aa). Residue 227-233 coordinates ATP; it reads SGGVDSS.

As to quaternary structure, homodimer.

It catalyses the reaction XMP + L-glutamine + ATP + H2O = GMP + L-glutamate + AMP + diphosphate + 2 H(+). It functions in the pathway purine metabolism; GMP biosynthesis; GMP from XMP (L-Gln route): step 1/1. Functionally, catalyzes the synthesis of GMP from XMP. This chain is GMP synthase [glutamine-hydrolyzing], found in Vibrio vulnificus (strain YJ016).